The following is a 354-amino-acid chain: MGRLVALSLLGIGLALLGERFLALRSRLKASREVESVDLPNCRLIKGIETGAEDIDILPNGLAFFSVGLKFPGLHSFAPDKPGGILMMDLKEEKPRALELRVSWGFDLASFNPHGISTFIDDDDTVYLFVVNHPEFKNTVEIFKFQEEENSLLHLKTIKHELLPSVNDVIAVGPSHFYATNDHYFSDPFLKYLETYLNLRWANVVYYSPEEVKLVAEGFDSANGINISPDKKYVYVADILAHEIHVLEKQPNMNLTQLKVLQLGTLVDNLSIDPSSGDIWVGCHPNGQKLFVYDPNHPPSSEVLRIQNILSEKPSVTTVYINNGSVLQGSSVATIYDRKLLVGTLYQRALYCEL.

A disulfide bond links C42 and C352. Ca(2+)-binding residues include E53 and D54. The active-site Proton acceptor is H114. Residues I116, N167, D168, and N223 each coordinate Ca(2+). The N-linked (GlcNAc...) asparagine glycan is linked to N254. Ca(2+)-binding residues include D268 and N269. N-linked (GlcNAc...) asparagine glycans are attached at residues N269 and N323.

This sequence belongs to the paraoxonase family. Homotrimer. Requires Ca(2+) as cofactor. In terms of processing, glycosylated. The signal sequence is not cleaved.

The protein localises to the membrane. The enzyme catalyses a phenyl acetate + H2O = a phenol + acetate + H(+). It catalyses the reaction an N-acyl-L-homoserine lactone + H2O = an N-acyl-L-homoserine + H(+). In terms of biological role, capable of hydrolyzing lactones and a number of aromatic carboxylic acid esters. In Rattus norvegicus (Rat), this protein is Serum paraoxonase/arylesterase 2 (Pon2).